A 180-amino-acid chain; its full sequence is ATP synthase subunit delta (180 aa).

This sequence belongs to the ATPase delta chain family. In terms of assembly, F-type ATPases have 2 components, F(1) - the catalytic core - and F(0) - the membrane proton channel. F(1) has five subunits: alpha(3), beta(3), gamma(1), delta(1), epsilon(1). F(0) has three main subunits: a(1), b(2) and c(10-14). The alpha and beta chains form an alternating ring which encloses part of the gamma chain. F(1) is attached to F(0) by a central stalk formed by the gamma and epsilon chains, while a peripheral stalk is formed by the delta and b chains.

The protein localises to the cell membrane. Its function is as follows. F(1)F(0) ATP synthase produces ATP from ADP in the presence of a proton or sodium gradient. F-type ATPases consist of two structural domains, F(1) containing the extramembraneous catalytic core and F(0) containing the membrane proton channel, linked together by a central stalk and a peripheral stalk. During catalysis, ATP synthesis in the catalytic domain of F(1) is coupled via a rotary mechanism of the central stalk subunits to proton translocation. This protein is part of the stalk that links CF(0) to CF(1). It either transmits conformational changes from CF(0) to CF(1) or is implicated in proton conduction. The sequence is that of ATP synthase subunit delta from Mycoplasma mobile (strain ATCC 43663 / 163K / NCTC 11711) (Mesomycoplasma mobile).